The following is a 287-amino-acid chain: ATP synthase gamma chain (287 aa).

This sequence belongs to the ATPase gamma chain family. In terms of assembly, F-type ATPases have 2 components, CF(1) - the catalytic core - and CF(0) - the membrane proton channel. CF(1) has five subunits: alpha(3), beta(3), gamma(1), delta(1), epsilon(1). CF(0) has three main subunits: a, b and c.

The protein resides in the cell membrane. Its function is as follows. Produces ATP from ADP in the presence of a proton gradient across the membrane. The gamma chain is believed to be important in regulating ATPase activity and the flow of protons through the CF(0) complex. The protein is ATP synthase gamma chain of Bacillus velezensis (strain DSM 23117 / BGSC 10A6 / LMG 26770 / FZB42) (Bacillus amyloliquefaciens subsp. plantarum).